We begin with the raw amino-acid sequence, 243 residues long: Orotidine 5'-phosphate decarboxylase (243 aa).

Residues Asp-19, Lys-41, 69–78 (DLKFFDIPAT), Thr-124, Arg-185, Gln-194, Gly-214, and Arg-215 contribute to the substrate site. Lys-71 serves as the catalytic Proton donor.

The protein belongs to the OMP decarboxylase family. Type 1 subfamily. In terms of assembly, homodimer.

The catalysed reaction is orotidine 5'-phosphate + H(+) = UMP + CO2. Its pathway is pyrimidine metabolism; UMP biosynthesis via de novo pathway; UMP from orotate: step 2/2. In terms of biological role, catalyzes the decarboxylation of orotidine 5'-monophosphate (OMP) to uridine 5'-monophosphate (UMP). This chain is Orotidine 5'-phosphate decarboxylase, found in Xanthomonas euvesicatoria pv. vesicatoria (strain 85-10) (Xanthomonas campestris pv. vesicatoria).